Reading from the N-terminus, the 733-residue chain is Ribosomal protein S6 kinase 2 alpha (733 aa).

The segment at E18–E38 is disordered. One can recognise a Protein kinase 1 domain in the interval F62–F321. ATP is bound by residues L68–V76 and K94. The active-site Proton acceptor is D187. S221 is subject to Phosphoserine. In terms of domain architecture, AGC-kinase C-terminal spans S322–A391. A Phosphothreonine modification is found at T359. A Phosphoserine modification is found at S363. Position 380 is a phosphoserine; by autocatalysis (S380). A Protein kinase 2 domain is found at Y416–I673. ATP contacts are provided by residues I422–C430 and K445. Residue D533 is the Proton acceptor of the active site. The residue at position 571 (T571) is a Phosphothreonine. A Phosphoserine modification is found at S730.

The protein belongs to the protein kinase superfamily. AGC Ser/Thr protein kinase family. S6 kinase subfamily. Mg(2+) serves as cofactor. In terms of processing, autophosphorylated on Ser-380, as part of the activation process.

It carries out the reaction L-seryl-[protein] + ATP = O-phospho-L-seryl-[protein] + ADP + H(+). It catalyses the reaction L-threonyl-[protein] + ATP = O-phospho-L-threonyl-[protein] + ADP + H(+). Activated by multiple phosphorylations on threonine and serine residues. Its function is as follows. Serine/threonine kinase that may play a role in mediating the growth-factor and stress induced activation of transcription. The polypeptide is Ribosomal protein S6 kinase 2 alpha (rps6ka) (Xenopus laevis (African clawed frog)).